A 117-amino-acid polypeptide reads, in one-letter code: Putative iron-sulfur cluster insertion protein ErpA (117 aa).

3 residues coordinate iron-sulfur cluster: Cys45, Cys109, and Cys111.

It belongs to the HesB/IscA family. Homodimer. Iron-sulfur cluster is required as a cofactor.

Required for insertion of 4Fe-4S clusters. The sequence is that of Putative iron-sulfur cluster insertion protein ErpA from Chromobacterium violaceum (strain ATCC 12472 / DSM 30191 / JCM 1249 / CCUG 213 / NBRC 12614 / NCIMB 9131 / NCTC 9757 / MK).